We begin with the raw amino-acid sequence, 139 residues long: Large ribosomal subunit protein uL22c (139 aa).

This sequence belongs to the universal ribosomal protein uL22 family. In terms of assembly, part of the 50S ribosomal subunit.

The protein localises to the plastid. It is found in the chloroplast. Functionally, this protein binds specifically to 23S rRNA. In terms of biological role, the globular domain of the protein is located near the polypeptide exit tunnel on the outside of the subunit, while an extended beta-hairpin is found that lines the wall of the exit tunnel in the center of the 70S ribosome. The sequence is that of Large ribosomal subunit protein uL22c (rpl22) from Cycas taitungensis (Prince sago).